The sequence spans 248 residues: Gamma-interferon-inducible lysosomal thiol reductase (248 aa).

The signal sequence occupies residues 1-26 (MSWSPILPFLSLLLLLFPLEVPRAAT). A propeptide spans 27–54 (ASLSQASSEGTTTCKAHDVCLLGPRPLP) (removed in mature form). Cysteine 69 and cysteine 72 form a disulfide bridge. Residues asparagine 92 and asparagine 105 are each glycosylated (N-linked (GlcNAc...) asparagine). A propeptide spans 231–248 (KPDICSSIADSPRKVCYK) (removed in mature form).

The protein belongs to the GILT family. In terms of assembly, dimer; disulfide-linked. Post-translationally, N-glycosylated. Sugar chains contain mannose-6-phosphate. Synthesized as a 35 kDa precursor which is then processed into the mature 30 kDa form via cleavage of N-terminal and C-terminal propeptides. Processing of the precursor is mediated by multiple lysosomal proteases.

The protein localises to the secreted. The protein resides in the lysosome. Its function is as follows. Lysosomal thiol reductase that can reduce protein disulfide bonds. May facilitate the complete unfolding of proteins destined for lysosomal degradation. Plays an important role in antigen processing. Facilitates the generation of MHC class II-restricted epitodes from disulfide bond-containing antigen by the endocytic reduction of disulfide bonds. Also facilitates MHC class I-restricted recognition of exogenous antigens containing disulfide bonds by CD8+ T-cells or crosspresentation. The chain is Gamma-interferon-inducible lysosomal thiol reductase (Ifi30) from Mus musculus (Mouse).